The sequence spans 55 residues: Large ribosomal subunit protein bL33 (55 aa).

The protein belongs to the bacterial ribosomal protein bL33 family.

This Aeromonas hydrophila subsp. hydrophila (strain ATCC 7966 / DSM 30187 / BCRC 13018 / CCUG 14551 / JCM 1027 / KCTC 2358 / NCIMB 9240 / NCTC 8049) protein is Large ribosomal subunit protein bL33.